The sequence spans 373 residues: Spore coat polysaccharide biosynthesis protein SpsE (373 aa).

The 63-residue stretch at 305–367 (GIFTTAPIQK…GIVWDDILLK (63 aa)) folds into the AFP-like domain.

The protein operates within spore coat biogenesis; spore coat polysaccharide biosynthesis. This Bacillus subtilis (strain 168) protein is Spore coat polysaccharide biosynthesis protein SpsE (spsE).